We begin with the raw amino-acid sequence, 560 residues long: Membrane protein insertase YidC (560 aa).

The next 6 membrane-spanning stretches (helical) occupy residues 5–25 (IINLIAAIILSLSIIFGWQYF), 334–354 (AIDFGWFYIITKPVFYAMNFF), 357–377 (YVGNFGVSILIVTVIIKLLMF), 431–451 (LPILVQIPVFFSIYKVLYVTI), 476–496 (LFGLLPFAPPSFLMIGAWPIL), and 522–542 (FMPLIFLFMFSSFPVGLLIYW).

The protein belongs to the OXA1/ALB3/YidC family. Type 1 subfamily. Interacts with the Sec translocase complex via SecD. Specifically interacts with transmembrane segments of nascent integral membrane proteins during membrane integration.

It localises to the cell inner membrane. In terms of biological role, required for the insertion and/or proper folding and/or complex formation of integral membrane proteins into the membrane. Involved in integration of membrane proteins that insert both dependently and independently of the Sec translocase complex, as well as at least some lipoproteins. Aids folding of multispanning membrane proteins. This is Membrane protein insertase YidC from Rickettsia rickettsii (strain Sheila Smith).